A 386-amino-acid chain; its full sequence is Protein-glutamate methylesterase/protein-glutamine glutaminase 3 (386 aa).

The 118-residue stretch at 4–121 (KVLVVDDSGF…SRNPQKVKQL (118 aa)) folds into the Response regulatory domain. The residue at position 55 (aspartate 55) is a 4-aspartylphosphate. The segment covering 132–194 (SNRRSSGFGS…SHAPAHPTTS (63 aa)) has biased composition (low complexity). The interval 132 to 197 (SNRRSSGFGS…PAHPTTSGTA (66 aa)) is disordered. The region spanning 191 to 383 (PTTSGTAKRK…LDDIGRHLVE (193 aa)) is the CheB-type methylesterase domain. Catalysis depends on residues serine 210, histidine 237, and aspartate 330.

This sequence belongs to the CheB family. Phosphorylated by CheA. Phosphorylation of the N-terminal regulatory domain activates the methylesterase activity.

The protein localises to the cytoplasm. It carries out the reaction [protein]-L-glutamate 5-O-methyl ester + H2O = L-glutamyl-[protein] + methanol + H(+). The catalysed reaction is L-glutaminyl-[protein] + H2O = L-glutamyl-[protein] + NH4(+). In terms of biological role, involved in chemotaxis. Part of a chemotaxis signal transduction system that modulates chemotaxis in response to various stimuli. Catalyzes the demethylation of specific methylglutamate residues introduced into the chemoreceptors (methyl-accepting chemotaxis proteins or MCP) by CheR. Also mediates the irreversible deamidation of specific glutamine residues to glutamic acid. This chain is Protein-glutamate methylesterase/protein-glutamine glutaminase 3, found in Pseudomonas syringae pv. syringae (strain B728a).